Reading from the N-terminus, the 357-residue chain is Putative diaminopimelate epimerase, chloroplastic (357 aa).

The N-terminal 47 residues, 1 to 47, are a transit peptide targeting the chloroplast; the sequence is MSSATAAATATIAAAAAAAAKLAATPAPAPSRRRLTLRGNPTARRCV. Catalysis depends on residues cysteine 145 and cysteine 300.

The protein belongs to the diaminopimelate epimerase family.

The protein resides in the plastid. It is found in the chloroplast. It carries out the reaction (2S,6S)-2,6-diaminopimelate = meso-2,6-diaminopimelate. It functions in the pathway amino-acid biosynthesis; L-lysine biosynthesis via DAP pathway; DL-2,6-diaminopimelate from LL-2,6-diaminopimelate: step 1/1. This chain is Putative diaminopimelate epimerase, chloroplastic (DAPF), found in Oryza sativa subsp. indica (Rice).